The chain runs to 161 residues: Glycine-rich RNA-binding protein blt801 (161 aa).

An RRM domain is found at 6–84 (YRCFVGGLRW…RNITVNEAQS (79 aa)). The tract at residues 72–161 (LDGRNITVNE…GGSGGGNWRE (90 aa)) is disordered. Phosphoserine; by PKA is present on serine 87. A compositionally biased stretch (gly residues) spans 89–161 (GGGGFGGGGG…GGSGGGNWRE (73 aa)).

Its function is as follows. Binds single-stranded DNA and homoribopolymers of guanine, uracil and adenine, but not cytosine. Also binds RNA, with a preference for RNA containing a high proportion of adenine within an open loop structure. Possibly has a role in RNA transcription or processing during stress. This Hordeum vulgare (Barley) protein is Glycine-rich RNA-binding protein blt801.